Here is a 1403-residue protein sequence, read N- to C-terminus: MPKEEDFQLPRRREAAKNVNYNEMEIDTKLVQQIQIAEKSGAKTKGSNSQTPRNCKRTSNPASRNEKFKYQKFLHDKNTCWNFIPTLPPSFRKNSRFSNILDLDDAMIDLKKMSLFNTESVLLSANDTIYMISEPAGEPYYVGRVVNFVSKPEFSNTIHEAIKTTSVFPAKFFQVRMNWFYRPRDIQEHVNTFNPRLVYASLHQDICPISSYRGKCSIFHKDEVFDVLPNEKECIIRPNIFYFDELFDRYTLKYYKVYSTDKILNKWNSKSPFLYVLNRRFRYIYTEPKYPLENVLKKYVFHELEVNELSPADYQWDKRCQFCKEWCIQKESLSCDECGVCAHLYCMDPPLDRKPNKDVVWTCFSCLQKQQGTKDSHVRFLEEQALELDFIRSVRQKIEEISSKAIKENVGYNTENCWFQYLGIYSISHIGDALNDSMFFPYPFKPSRVGVKYQWNGCNHNVPWRRNSYISANSEEERGSTKTSELAWVLDASKITTRKLSEYIEQCKSEICPILNVRGETCNFIDVVLKNLLFTNYDTAEAFKKCKRELSRKFLKEPSFTAVEIRKFEEAVEKFGSELRPVCEYVGTQPMSMIVRFYYNWKKTERGLTVRGKLSKLSKNKRKKEIANHENDVETKYIDDSSFDTEKLSLAESSFQCMFCKTDYSPMWYRVTGGSDDEKIKIRMQTGVNEKTEISEKSPAHSKKNEKLGALCIRCARMWRRYAIKWVPPLETLRKITGTCQNSFYSAIEGIIEENNTNKFTLSPFQAHNKLLEWELVQDSELIIRQRMKVYKNPNSFVKMKRYSMTFHTQLYKMAVRSYRKNEFHPETMQRDLELFIEDNKEVRKAIPEQKPERAKNTKDEFPVNIIRQSPGTIKTSDTSRNRKCNDVFIEKASNNNIPKITNASNDLIEISIKTGGSSSGSVSVDKGFKFVKFDNKTFQRLRNSLKLVNNKLPKYNEPSTKKIKMINDIALSNPLNEPNGASYNYTVISHSKETSVALEKYHDGNKPSKMLEKDMILKHTKNKPKNPDTAWANNSARTFCSVCKEKFNDNDNYEVVCGNCGLTVHYFCYAIKLPKDMKKNTNLKTFKWLCDPCSNDLNPIISTTYQCSMCPTKDYDYDRYRSQSFKICPDALKCTSLGTWVHLVCSLFNEDIKYGNGQSMQPALNTTAVLIKHSRFTCGVCRINGGGLVKCNKCQYRYHITCAQNSSNFKLMFEKKNMSVDTTLPCIKDVKLNDTYTLRPILICDRHDISLEGNELYPLSYKPQHTLSYIEQYCRYYKCESDHSLVELRYFEQLRLRHGEMPGNSHDSAIKPKIYVLPFERTCPHCGTNKSLYWYEDIICHSCNLRSGAQELDFDSASANISNDNGLPVEITQQLMEGIEPAMFDIDISEAGTDKNTHPSSQ.

Positions 40–62 (SGAKTKGSNSQTPRNCKRTSNPA) are disordered. A compositionally biased stretch (polar residues) spans 45–62 (KGSNSQTPRNCKRTSNPA). The 138-residue stretch at 121–258 (VLLSANDTIY…RYTLKYYKVY (138 aa)) folds into the BAH domain. The PHD-type 1 zinc-finger motif lies at 317–369 (DKRCQFCKEWCIQKESLSCDECGVCAHLYCMDPPLDRKPNKDVVWTCFSCLQK). The SANT domain occupies 555-606 (LKEPSFTAVEIRKFEEAVEKFGSELRPVCEYVGTQPMSMIVRFYYNWKKTER). The PHD-type 2 zinc-finger motif lies at 1038–1097 (RTFCSVCKEKFNDNDNYEVVCGNCGLTVHYFCYAIKLPKDMKKNTNLKTFKWLCDPCSND). An RING-type; degenerate zinc finger spans residues 1041–1095 (CSVCKEKFNDNDNYEVVCGNCGLTVHYFCYAIKLPKDMKKNTNLKTFKWLCDPCS). Residues 1105–1153 (TYQCSMCPTKDYDYDRYRSQSFKICPDALKCTSLGTWVHLVCSLFNEDI) form a C2HC pre-PHD-type zinc finger. The segment at 1177–1231 (FTCGVCRINGGGLVKCNKCQYRYHITCAQNSSNFKLMFEKKNMSVDTTLPCIKDV) adopts a PHD-type 3; degenerate zinc-finger fold.

In terms of assembly, component of the Snt2C complex composed of SNT2, ECM5 and RPD3. Interacts with the E2 ubiquitin-conjugating enzyme UBC4 and histones H3 and H4. Binding is enhanced to methylated histone H3K36me3.

The protein localises to the cytoplasm. The protein resides in the nucleus. The enzyme catalyses S-ubiquitinyl-[E2 ubiquitin-conjugating enzyme]-L-cysteine + [acceptor protein]-L-lysine = [E2 ubiquitin-conjugating enzyme]-L-cysteine + N(6)-ubiquitinyl-[acceptor protein]-L-lysine.. Transcriptional regulator that, together with ECM5, recruits histone deacetylase RPD3 to a small number of promoters of stress-response genes in response to oxidative stress. Probable ubiquitin-protein ligase involved in the degradation-related ubiquitination of histones. Contributes to the post-translational regulation of histone protein levels by polyubiquitination of excess histones for subsequent degradation. In Saccharomyces cerevisiae (strain ATCC 204508 / S288c) (Baker's yeast), this protein is E3 ubiquitin-protein ligase SNT2.